The sequence spans 498 residues: 4-aminobutyrate aminotransferase (498 aa).

164–165 (GS) is a binding site for pyridoxal 5'-phosphate. Arg222 is a substrate binding site. N6-(pyridoxal phosphate)lysine is present on Lys356. Thr381 contacts pyridoxal 5'-phosphate.

The protein belongs to the class-III pyridoxal-phosphate-dependent aminotransferase family. In terms of assembly, homodimer. Requires pyridoxal 5'-phosphate as cofactor.

It is found in the cytoplasm. The catalysed reaction is 4-aminobutanoate + 2-oxoglutarate = succinate semialdehyde + L-glutamate. Its function is as follows. Deaminates gamma-aminobutyric acid (GABA) to succinate-semialdehyde, which in turn is converted to succinate by the succinate semialdehyde dehydrogenase. Required for the degradation of GABA, which is important for utilization of GABA as nitrogen source. In Emericella nidulans (strain FGSC A4 / ATCC 38163 / CBS 112.46 / NRRL 194 / M139) (Aspergillus nidulans), this protein is 4-aminobutyrate aminotransferase (gatA).